Reading from the N-terminus, the 477-residue chain is Ribulose bisphosphate carboxylase large chain (477 aa).

Positions 1–2 (MS) are excised as a propeptide. The residue at position 3 (P3) is an N-acetylproline. K14 bears the N6,N6,N6-trimethyllysine mark. Substrate contacts are provided by N123 and T173. The active-site Proton acceptor is the K175. Substrate is bound at residue K177. Mg(2+)-binding residues include K201, D203, and E204. K201 carries the N6-carboxylysine modification. H294 functions as the Proton acceptor in the catalytic mechanism. R295, H327, and S379 together coordinate substrate.

This sequence belongs to the RuBisCO large chain family. Type I subfamily. In terms of assembly, heterohexadecamer of 8 large chains and 8 small chains; disulfide-linked. The disulfide link is formed within the large subunit homodimers. Mg(2+) serves as cofactor. In terms of processing, the disulfide bond which can form in the large chain dimeric partners within the hexadecamer appears to be associated with oxidative stress and protein turnover.

The protein localises to the plastid. The protein resides in the chloroplast. It carries out the reaction 2 (2R)-3-phosphoglycerate + 2 H(+) = D-ribulose 1,5-bisphosphate + CO2 + H2O. The enzyme catalyses D-ribulose 1,5-bisphosphate + O2 = 2-phosphoglycolate + (2R)-3-phosphoglycerate + 2 H(+). RuBisCO catalyzes two reactions: the carboxylation of D-ribulose 1,5-bisphosphate, the primary event in carbon dioxide fixation, as well as the oxidative fragmentation of the pentose substrate in the photorespiration process. Both reactions occur simultaneously and in competition at the same active site. The chain is Ribulose bisphosphate carboxylase large chain from Persea americana (Avocado).